The primary structure comprises 198 residues: Recombination protein RecR (198 aa).

The segment at 57–72 (CSECQTLTDKDPCAVC) adopts a C4-type zinc-finger fold. In terms of domain architecture, Toprim spans 80–175 (RIICVVEGVP…KVTRIAQGIP (96 aa)).

It belongs to the RecR family.

Functionally, may play a role in DNA repair. It seems to be involved in an RecBC-independent recombinational process of DNA repair. It may act with RecF and RecO. The chain is Recombination protein RecR from Anaeromyxobacter sp. (strain Fw109-5).